We begin with the raw amino-acid sequence, 523 residues long: Synaptotagmin-10 (523 aa).

The Vesicular segment spans residues 1–55 (MSFHKEDGVNSLCQKALHIVTELCFAGQVEWEKCSGIFPRDRGSQGGSSTDISVS). Residues 13-35 (CQKALHIVTELCFAGQVEWEKCS) form a cysteine motif region. The chain crosses the membrane as a helical span at residues 56 to 76 (LLAVVVSFCGLALLVVSLFVF). Topologically, residues 77-523 (WKLCWPCWKS…CPSPKPPSTP (447 aa)) are cytoplasmic. Thr-136 is modified (phosphothreonine). C2 domains lie at 231 to 352 (ICGK…TVWK) and 363 to 496 (DLGE…THWH). Ca(2+) contacts are provided by Asp-262, Asp-268, Asp-320, Phe-321, Asp-322, Ser-325, Asp-328, Asp-394, Asp-400, Asp-454, and Asp-456.

Belongs to the synaptotagmin family. As to quaternary structure, homodimer; disulfide-linked via the cysteine motif. Can also form heterodimers with SYT3, SYT6, SYT7 and SYT9. Requires Ca(2+) as cofactor.

It localises to the cytoplasmic vesicle. The protein resides in the secretory vesicle membrane. In terms of biological role, ca(2+) sensor specifically required for the Ca(2+)-dependent exocytosis of secretory vesicles containing IGF1 in neurons of the olfactory bulb. Exocytosis of IGF1 is required for sensory perception of smell. Not involved in Ca(2+)-dependent synaptic vesicle exocytosis. Acts through Ca(2+) and phospholipid binding to the C2 domain: Ca(2+) induces binding of the C2-domains to phospholipid membranes and to assembled SNARE-complexes; both actions contribute to triggering exocytosis. This chain is Synaptotagmin-10 (SYT10), found in Pongo abelii (Sumatran orangutan).